A 164-amino-acid chain; its full sequence is 2-C-methyl-D-erythritol 2,4-cyclodiphosphate synthase (164 aa).

A divalent metal cation contacts are provided by Asp9 and His11. Residues 9 to 11 and 36 to 37 contribute to the 4-CDP-2-C-methyl-D-erythritol 2-phosphate site; these read DAH and HS. His44 contacts a divalent metal cation. 4-CDP-2-C-methyl-D-erythritol 2-phosphate contacts are provided by residues 58–60, 63–67, 134–137, Phe141, and Arg144; these read DLG, FPDSD, and TTTE.

It belongs to the IspF family. As to quaternary structure, homotrimer. Requires a divalent metal cation as cofactor.

It carries out the reaction 4-CDP-2-C-methyl-D-erythritol 2-phosphate = 2-C-methyl-D-erythritol 2,4-cyclic diphosphate + CMP. The protein operates within isoprenoid biosynthesis; isopentenyl diphosphate biosynthesis via DXP pathway; isopentenyl diphosphate from 1-deoxy-D-xylulose 5-phosphate: step 4/6. Involved in the biosynthesis of isopentenyl diphosphate (IPP) and dimethylallyl diphosphate (DMAPP), two major building blocks of isoprenoid compounds. Catalyzes the conversion of 4-diphosphocytidyl-2-C-methyl-D-erythritol 2-phosphate (CDP-ME2P) to 2-C-methyl-D-erythritol 2,4-cyclodiphosphate (ME-CPP) with a corresponding release of cytidine 5-monophosphate (CMP). The sequence is that of 2-C-methyl-D-erythritol 2,4-cyclodiphosphate synthase from Alkalilimnicola ehrlichii (strain ATCC BAA-1101 / DSM 17681 / MLHE-1).